Consider the following 375-residue polypeptide: Eukaryotic translation initiation factor 3 subunit F (375 aa).

Residues 30-166 (VVIQPQALFS…TRAYISAPVG (137 aa)) form the MPN domain. Positions 307-375 (LGGESGSGES…EAQNGKEEKK (69 aa)) are disordered. Residues 323–332 (QRGGKGGRGG) show a composition bias toward gly residues. 2 stretches are compositionally biased toward basic and acidic residues: residues 336-345 (TQERSGEEAR) and 358-375 (RSYE…EEKK).

The protein belongs to the eIF-3 subunit F family. As to quaternary structure, component of the eukaryotic translation initiation factor 3 (eIF-3) complex.

The protein localises to the cytoplasm. In terms of biological role, component of the eukaryotic translation initiation factor 3 (eIF-3) complex, which is involved in protein synthesis of a specialized repertoire of mRNAs and, together with other initiation factors, stimulates binding of mRNA and methionyl-tRNAi to the 40S ribosome. The eIF-3 complex specifically targets and initiates translation of a subset of mRNAs involved in cell proliferation. This chain is Eukaryotic translation initiation factor 3 subunit F, found in Aspergillus niger (strain ATCC MYA-4892 / CBS 513.88 / FGSC A1513).